Here is a 150-residue protein sequence, read N- to C-terminus: Glycophorin-A (150 aa).

The first 19 residues, 1–19 (MYGKIIFVLLLSEIVSISA), serve as a signal peptide directing secretion. At 20-91 (LSTTEVAMHT…QLAHHFSEPE (72 aa)) the chain is on the extracellular side. Serine 21 is a glycosylation site (O-linked (GalNAc...) serine). 3 O-linked (GalNAc...) threonine glycosylation sites follow: threonine 22, threonine 23, and threonine 29. Serine 30 carries an O-linked (GalNAc...) serine glycan. An O-linked (GalNAc...) threonine glycan is attached at threonine 31. Serine 32 carries an O-linked (GalNAc...) serine glycan. An O-linked (GalNAc...) threonine glycan is attached at threonine 36. O-linked (GalNAc...) serine glycans are attached at residues serine 38 and serine 41. Residue threonine 44 is glycosylated (O-linked (GalNAc...) threonine). Residue asparagine 45 is glycosylated (N-linked (GlcNAc...) asparagine). Residues threonine 52 and threonine 56 are each glycosylated (O-linked (GalNAc...) threonine). 2 O-linked (GalNAc...) serine glycosylation sites follow: serine 63 and serine 66. The O-linked (GalNAc...) threonine glycan is linked to threonine 69. The chain crosses the membrane as a helical span at residues 92 to 114 (ITLIIFGVMAGVIGTILLISYGI). Topologically, residues 115–150 (RRLIKKSPSDVKPLPSPDTDVPLSSVEIENPETSDQ) are cytoplasmic. Positions 121–150 (SPSDVKPLPSPDTDVPLSSVEIENPETSDQ) are disordered. At threonine 133 the chain carries Phosphothreonine. Phosphoserine is present on residues serine 138 and serine 148.

Belongs to the glycophorin A family. As to quaternary structure, homodimer. Component of the ankyrin-1 complex in the erythrocyte, composed of ANK1, RHCE, RHAG, SLC4A1, EPB42, GYPA, GYPB and AQP1. Interacts with SLC4A1; a GYPA monomer is bound at each end of the SLC4A1 dimer forming a heterotetramer. (Microbial infection) Interacts with Streptococcus gordonii hsa protein. In terms of assembly, (Microbial infection) Interacts (in a sialic acid-independent manner) with P.falciparum MSP1 subunit p83. In terms of processing, the major O-linked glycan are NeuAc-alpha-(2-3)-Gal-beta-(1-3)-[NeuAc-alpha-(2-6)]-GalNAcOH (about 78 %) and NeuAc-alpha-(2-3)-Gal-beta-(1-3)-GalNAcOH (17 %). Minor O-glycans (5 %) include NeuAc-alpha-(2-3)-Gal-beta-(1-3)-[NeuAc-alpha-(2-6)]-GalNAcOH NeuAc-alpha-(2-8)-NeuAc-alpha-(2-3)-Gal-beta-(1-3)-GalNAcOH. About 1% of all O-linked glycans carry blood group A, B and H determinants. They derive from a type-2 precursor core structure, Gal-beta-(1,3)-GlcNAc-beta-1-R, and the antigens are synthesized by addition of fucose (H antigen-specific) and then N-acetylgalactosamine (A antigen-specific) or galactose (B antigen-specific). Specifically O-linked-glycans are NeuAc-alpha-(2-3)-Gal-beta-(1-3)-GalNAcOH-(6-1)-GlcNAc-beta-(4-1)-[Fuc-alpha-(1-2)]-Gal-beta-(3-1)-GalNAc-alpha (about 1%, B antigen-specific) and NeuAc-alpha-(2-3)-Gal-beta-(1-3)-GalNAcOH-(6-1)-GlcNAc-beta-(4-1)-[Fuc-alpha-(1-2)]-Gal-beta (1 %, O antigen-, A antigen- and B antigen-specific).

The protein resides in the cell membrane. Component of the ankyrin-1 complex, a multiprotein complex involved in the stability and shape of the erythrocyte membrane. Glycophorin A is the major intrinsic membrane protein of the erythrocyte. The N-terminal glycosylated segment, which lies outside the erythrocyte membrane, has MN blood group receptors. Appears to be important for the function of SLC4A1 and is required for high activity of SLC4A1. May be involved in translocation of SLC4A1 to the plasma membrane. Its function is as follows. (Microbial infection) Appears to be a receptor for Hepatitis A virus (HAV). Functionally, (Microbial infection) Receptor for P.falciparum erythrocyte-binding antigen 175 (EBA-175); binding of EBA-175 is dependent on sialic acid residues of the O-linked glycans. The polypeptide is Glycophorin-A (Homo sapiens (Human)).